The primary structure comprises 492 residues: Tyrosine--tRNA ligase, mitochondrial (492 aa).

Tyr89 contacts L-tyrosine. Asp93 provides a ligand contact to ATP. The 'HIGH' region motif lies at 94-103 (PTAQSLHLGN). Asp133, Tyr239, Gln243, Asp246, and Gln265 together coordinate L-tyrosine. Residues 303-307 (KFGKS) carry the 'KMSKS' region motif. ATP is bound at residue Lys306.

It belongs to the class-I aminoacyl-tRNA synthetase family. In terms of assembly, homodimer.

Its subcellular location is the mitochondrion matrix. The enzyme catalyses tRNA(Tyr) + L-tyrosine + ATP = L-tyrosyl-tRNA(Tyr) + AMP + diphosphate + H(+). Functionally, catalyzes the attachment of tyrosine to tRNA(Tyr) in a two-step reaction: tyrosine is first activated by ATP to form Tyr-AMP and then transferred to the acceptor end of tRNA(Tyr). This Saccharomyces cerevisiae (strain ATCC 204508 / S288c) (Baker's yeast) protein is Tyrosine--tRNA ligase, mitochondrial (MSY1).